Here is a 388-residue protein sequence, read N- to C-terminus: MIKNPKVLILTAHYGNGHVQVAKTLEQTFRQKGIKDVIVCDLFGESHPVITDITKYLYLKSYTIGKELYRLFYYGVEKIYDKKIASWYANFGRKRLKLLLKAEKPDIVINTFPIIAVPELKKQTGISIPVYNVLTDFCVHKIWIHREVDRYFVATDHVKKVMVDIGVPAEQIVETGIPIRSSFELKINPDIIYNKYQLCKNKKILLIVAGAHGVLGSVKELCQSFMSVPDLQVVVVCGKNEALKQDLVGVQDTNPDALKVFGYVENIDELFRVTSCMITKPGGITLSEAAALQVPVILYKPVPGQENENAMYFERKGAAVVIRDDSEVFAKTEALLQDDMKLLQMKEAMKSIYRPEPAGHIVDTILAENHVEPNHIPIKSPALAQSFT.

This sequence belongs to the glycosyltransferase 28 family. UgtP subfamily.

The protein localises to the cell membrane. It catalyses the reaction a 1,2-diacyl-3-O-(beta-D-glucopyranosyl)-sn-glycerol + UDP-alpha-D-glucose = a 1,2-diacyl-3-O-(beta-D-Glc-(1-&gt;6)-beta-D-Glc)-sn-glycerol + UDP + H(+). The enzyme catalyses a 1,2-diacyl-3-O-(beta-D-Glc-(1-&gt;6)-beta-D-Glc)-sn-glycerol + UDP-alpha-D-glucose = a 1,2-diacyl-3-O-(beta-D-Glc-(1-&gt;6)-beta-D-Glc-(1-&gt;6)-beta-D-Glc)-sn-glycerol + UDP + H(+). The catalysed reaction is a 1,2-diacyl-sn-glycerol + UDP-alpha-D-glucose = a 1,2-diacyl-3-O-(beta-D-glucopyranosyl)-sn-glycerol + UDP + H(+). Its pathway is glycolipid metabolism; diglucosyl-diacylglycerol biosynthesis. Processive glucosyltransferase involved in the biosynthesis of both the bilayer- and non-bilayer-forming membrane glucolipids. Is able to successively transfer up to three glucosyl residues to diacylglycerol (DAG), thereby catalyzing the formation of beta-monoglucosyl-DAG (3-O-(beta-D-glucopyranosyl)-1,2-diacyl-sn-glycerol), beta-diglucosyl-DAG (3-O-(beta-D-glucopyranosyl-beta-(1-&gt;6)-D-glucopyranosyl)-1,2-diacyl-sn-glycerol) and beta-triglucosyl-DAG (3-O-(beta-D-glucopyranosyl-beta-(1-&gt;6)-D-glucopyranosyl-beta-(1-&gt;6)-D-glucopyranosyl)-1,2-diacyl-sn-glycerol). Beta-diglucosyl-DAG is the predominant glycolipid found in Bacillales and is also used as a membrane anchor for lipoteichoic acid (LTA). The chain is Processive diacylglycerol beta-glucosyltransferase from Bacillus cereus (strain 03BB102).